The sequence spans 219 residues: Elongation factor Ts (219 aa).

Residues 83 to 86 (TDFV) form an involved in Mg(2+) ion dislocation from EF-Tu region.

This sequence belongs to the EF-Ts family.

It is found in the cytoplasm. In terms of biological role, associates with the EF-Tu.GDP complex and induces the exchange of GDP to GTP. It remains bound to the aminoacyl-tRNA.EF-Tu.GTP complex up to the GTP hydrolysis stage on the ribosome. This is Elongation factor Ts from Synechococcus sp. (strain WH7803).